Here is a 119-residue protein sequence, read N- to C-terminus: Phosphoribosyl-AMP cyclohydrolase (119 aa).

Residue D77 participates in Mg(2+) binding. C78 is a Zn(2+) binding site. Mg(2+) is bound by residues D79 and D81. 2 residues coordinate Zn(2+): C94 and C101.

This sequence belongs to the PRA-CH family. As to quaternary structure, homodimer. It depends on Mg(2+) as a cofactor. Zn(2+) is required as a cofactor.

Its subcellular location is the cytoplasm. It carries out the reaction 1-(5-phospho-beta-D-ribosyl)-5'-AMP + H2O = 1-(5-phospho-beta-D-ribosyl)-5-[(5-phospho-beta-D-ribosylamino)methylideneamino]imidazole-4-carboxamide. It functions in the pathway amino-acid biosynthesis; L-histidine biosynthesis; L-histidine from 5-phospho-alpha-D-ribose 1-diphosphate: step 3/9. In terms of biological role, catalyzes the hydrolysis of the adenine ring of phosphoribosyl-AMP. In Cereibacter sphaeroides (strain ATCC 17029 / ATH 2.4.9) (Rhodobacter sphaeroides), this protein is Phosphoribosyl-AMP cyclohydrolase.